Reading from the N-terminus, the 252-residue chain is Hydroxyacylglutathione hydrolase (252 aa).

Histidine 54, histidine 56, aspartate 58, histidine 59, histidine 111, aspartate 128, and histidine 166 together coordinate Zn(2+).

It belongs to the metallo-beta-lactamase superfamily. Glyoxalase II family. As to quaternary structure, monomer. Zn(2+) is required as a cofactor.

The catalysed reaction is an S-(2-hydroxyacyl)glutathione + H2O = a 2-hydroxy carboxylate + glutathione + H(+). The protein operates within secondary metabolite metabolism; methylglyoxal degradation; (R)-lactate from methylglyoxal: step 2/2. Functionally, thiolesterase that catalyzes the hydrolysis of S-D-lactoyl-glutathione to form glutathione and D-lactic acid. The sequence is that of Hydroxyacylglutathione hydrolase from Vibrio parahaemolyticus serotype O3:K6 (strain RIMD 2210633).